Here is a 407-residue protein sequence, read N- to C-terminus: Inhibin beta B chain (407 aa).

Residues 1-28 form the signal peptide; the sequence is MDGLPGRALGAACLLLLAAGWLGPEAWG. The tract at residues 26–62 is disordered; the sequence is AWGSPTPPPTPAAPPPPPPPGSPGGSQDTCTSCGGFR. Positions 29–292 are excised as a propeptide; that stretch reads SPTPPPTPAA…GDSRHRIRKR (264 aa). Residues 30-47 show a composition bias toward pro residues; that stretch reads PTPPPTPAAPPPPPPPGS. Asparagine 93 is a glycosylation site (N-linked (GlcNAc...) asparagine). 4 cysteine pairs are disulfide-bonded: cysteine 296/cysteine 304, cysteine 303/cysteine 372, cysteine 332/cysteine 404, and cysteine 336/cysteine 406.

This sequence belongs to the TGF-beta family. Dimeric, linked by one or more disulfide bonds. Inhibin B is a dimer of alpha and beta-B. Activin B is a homodimer of beta-B. Activin AB is a dimer of beta-A and beta-B. Interacts with FST and FSTL3. Activin B interacts with BMPR2.

The protein resides in the secreted. Inhibins and activins inhibit and activate, respectively, the secretion of follitropin by the pituitary gland. Inhibins/activins are involved in regulating a number of diverse functions such as hypothalamic and pituitary hormone secretion, gonadal hormone secretion, germ cell development and maturation, erythroid differentiation, insulin secretion, nerve cell survival, embryonic axial development or bone growth, depending on their subunit composition. Inhibins appear to oppose the functions of activins. Its function is as follows. Activin B is a dimer of alpha and beta-B that plays a role in several essential biological processes including embryonic development, stem cell maintenance and differentiation, haematopoiesis, cell proliferation and wound healing. Signals through type I receptor ACVR1C, abundantly expressed in pancreatic beta cells, and type II receptors like ACVR2A or BMPR2. Upon ligand binding, these receptors phosphorylate intracellular signaling mediators SMAD2 and SMAD3, which form a complex with SMAD4, translocate to the nucleus, and regulate gene expression. Plays a crucial role in the induction of hepcidin by inflammation through activation of ACVR1C and subsequent phosphorylation of SMAD1/5/8. Regulates adipocyte lipid metabolism by decreasing non-esterified fatty acids and glycerol release and increases intracellular triglyceride content. Stimulates wound healing by promoting cell migration and hair follicle regeneration through the JNK and ERK signaling pathways downstream of RHOA. In terms of biological role, inhibin B is a dimer of alpha and beta-B that plays a crucial role in the regulation of the reproductive system by inhibiting the secretion of follicle-stimulating hormone (FSH) from the anterior pituitary gland. Thereby, maintains reproductive homeostasis in both males and females. Acts as a more potent suppressor of FSH release than inhibin A. Functions as competitive receptor antagonist binding activin type II receptors with high affinity in the presence of the TGF-beta type III coreceptor/TGFBR3L. This chain is Inhibin beta B chain (INHBB), found in Homo sapiens (Human).